The chain runs to 816 residues: Endo-acting ulvan lyase (816 aa).

The signal sequence occupies residues 1–23 (MGTSVRRISVVLMMLFGTNFCWS).

This sequence belongs to the polysaccharide lyase family.

The protein resides in the cell surface. The protein localises to the periplasm. Its function is as follows. Ulvan lyase involved in ulvan degradation. Ulvan is the main polysaccharide component of the Ulvales (green seaweed) cell wall. It is composed of disaccharide building blocks comprising 3-sulfated rhamnose (Rha3S) linked to D-glucuronic acid (GlcA), L-iduronic acid (IduA), or D-xylose (Xyl). Ulvan lyase catalyzes the endolytic cleavage of the glycosidic bond between Rha3S and the uronic acids GlcA or IduA, producing oligosaccharides that have unsaturated 4-deoxy-L-threo-hex-4-enopyranosiduronic acid (deltaUA) at the non-reducing end. This results eventually in the degradation of the ulvan polysaccharide into deltaUA-Rha3S disaccharides and deltaUA-Rha3S-Xyl-Rha3S tetrasaccharides. This is Endo-acting ulvan lyase from Formosa agariphila (strain DSM 15362 / KCTC 12365 / LMG 23005 / KMM 3901 / M-2Alg 35-1).